Consider the following 514-residue polypeptide: Serine/threonine protein phosphatase PstP (514 aa).

At 1–302 (MARVTLVLRY…RPRWSGRRLA (302 aa)) the chain is on the cytoplasmic side. In terms of domain architecture, PPM-type phosphatase spans 9-238 (RYAARSDRGL…DNVTVVVADV (230 aa)). Asp38, Gly39, Asp118, Ser160, Asp191, and Asp229 together coordinate Mn(2+). A helical membrane pass occupies residues 303-323 (FVVALVTVLMTAGLLIGRAII). Topologically, residues 324–514 (RSNYYVADYA…QPGIDCRAAA (191 aa)) are extracellular. A disordered region spans residues 420–514 (LLPPCPAPRA…QPGIDCRAAA (95 aa)). Residues 440 to 480 (TTSETTEPNVTSSPASPSPTTSASAPTGTTPAIPTSASPAA) show a composition bias toward low complexity.

The cofactor is Mn(2+).

The protein resides in the cell membrane. It catalyses the reaction O-phospho-L-seryl-[protein] + H2O = L-seryl-[protein] + phosphate. The enzyme catalyses O-phospho-L-threonyl-[protein] + H2O = L-threonyl-[protein] + phosphate. Its function is as follows. Plays an important role in regulating cell division and growth by reversible phosphorylation signaling. May play important roles in regulating cellular metabolism and signaling pathways, which could mediate the growth and development of the cell. Plays a role in establishing and maintaining infection. The chain is Serine/threonine protein phosphatase PstP (pstP) from Mycobacterium tuberculosis (strain CDC 1551 / Oshkosh).